The sequence spans 153 residues: Large ribosomal subunit protein uL13 (153 aa).

Positions 134–153 are disordered; sequence EAQQPQALDVGSLNRKNVSA.

This sequence belongs to the universal ribosomal protein uL13 family. As to quaternary structure, part of the 50S ribosomal subunit.

Its function is as follows. This protein is one of the early assembly proteins of the 50S ribosomal subunit, although it is not seen to bind rRNA by itself. It is important during the early stages of 50S assembly. This is Large ribosomal subunit protein uL13 from Methylorubrum extorquens (strain CM4 / NCIMB 13688) (Methylobacterium extorquens).